The primary structure comprises 479 residues: Sulfate adenylyltransferase subunit 1 (479 aa).

The 217-residue stretch at 22-238 folds into the tr-type G domain; the sequence is KDMLRFLTCG…DSMDISKEPK (217 aa). Positions 31 to 38 are G1; the sequence is GSVDDGKS. 31–38 is a GTP binding site; it reads GSVDDGKS. Positions 89–93 are G2; that stretch reads GITID. The segment at 110–113 is G3; the sequence is DTPG. GTP is bound by residues 110-114 and 165-168; these read DTPGH and NKMD. Positions 165 to 168 are G4; it reads NKMD. Residues 202-204 form a G5 region; the sequence is SAL.

The protein belongs to the TRAFAC class translation factor GTPase superfamily. Classic translation factor GTPase family. CysN/NodQ subfamily. As to quaternary structure, heterodimer composed of CysD, the smaller subunit, and CysN.

It carries out the reaction sulfate + ATP + H(+) = adenosine 5'-phosphosulfate + diphosphate. It participates in sulfur metabolism; hydrogen sulfide biosynthesis; sulfite from sulfate: step 1/3. With CysD forms the ATP sulfurylase (ATPS) that catalyzes the adenylation of sulfate producing adenosine 5'-phosphosulfate (APS) and diphosphate, the first enzymatic step in sulfur assimilation pathway. APS synthesis involves the formation of a high-energy phosphoric-sulfuric acid anhydride bond driven by GTP hydrolysis by CysN coupled to ATP hydrolysis by CysD. The polypeptide is Sulfate adenylyltransferase subunit 1 (Sulfurovum sp. (strain NBC37-1)).